A 173-amino-acid polypeptide reads, in one-letter code: MGKIIFYEDRNFQGRNYECSSDCADLSPYFSRCNSIRVESDWWVLYEKPNYMGYQHVLTRGEYPDYQRWMGFNDCVRSCRVPTHTQRPYRMRIYERPDFGGQMMEFMDVCPSVYDRFRYRDIHSSHVMGAYWIFYEHPNYRGRLYFMRPGEYRRYSDWGGYSSTIGSFRRIME.

Beta/gamma crystallin 'Greek key' domains are found at residues 2–40 (GKII…RVES) and 41–83 (DWWV…RVPT). Residues 84–88 (HTQRP) form a connecting peptide region. Beta/gamma crystallin 'Greek key' domains lie at 89 to 129 (YRMR…HVMG) and 130 to 172 (AYWI…RRIM).

This sequence belongs to the beta/gamma-crystallin family.

Crystallins are the dominant structural components of the vertebrate eye lens. The chain is Gamma-crystallin S-2 (GS-2) from Chiloscyllium indicum (Slender bamboo shark).